Here is a 438-residue protein sequence, read N- to C-terminus: Glutamyl-tRNA reductase (438 aa).

Residues 49–52, Ser109, 114–116, and Gln120 contribute to the substrate site; these read TCNR and EQQ. Cys50 functions as the Nucleophile in the catalytic mechanism. 191–196 lines the NADP(+) pocket; it reads GAGAMA.

The protein belongs to the glutamyl-tRNA reductase family. In terms of assembly, homodimer.

It catalyses the reaction (S)-4-amino-5-oxopentanoate + tRNA(Glu) + NADP(+) = L-glutamyl-tRNA(Glu) + NADPH + H(+). It participates in porphyrin-containing compound metabolism; protoporphyrin-IX biosynthesis; 5-aminolevulinate from L-glutamyl-tRNA(Glu): step 1/2. Functionally, catalyzes the NADPH-dependent reduction of glutamyl-tRNA(Glu) to glutamate 1-semialdehyde (GSA). This Corynebacterium diphtheriae (strain ATCC 700971 / NCTC 13129 / Biotype gravis) protein is Glutamyl-tRNA reductase.